A 346-amino-acid chain; its full sequence is MTSVDTMPPPMVRLESQPDDLMGSSDVADVSDLLPGHTNGLEDEVKIPATNGLKSHPVVTTGTEKTGVMPPLQPESKKNNKGVPWYHASPNDIDPVTRGLLENYSKIPSDQVQQHVIAIREKAWDVYPYPCIGQFLFLNLTINLSPYYPSLVSRLRDQNQTLLDLGCCFAQDVRKLVSDGAPSQNIYGADLYGEFMDLGFELFRDRKTLKSTFFPTDILNERDLLLKGLDGEMDVVYLGLFLHHFDFETCVKVCTRVTRLLKPKPGSLVMGVQVGSLVGDTKPIPIPSGGILWRHDIASLERVWEEVGALTGTKWKVEARLERGKGFGEKWQLEGTRRLGFEVYRL.

Disordered regions lie at residues 1 to 22 (MTSV…DDLM) and 52 to 88 (GLKS…WYHA). Residues 190 to 191 (DL) and 217 to 218 (DI) contribute to the S-adenosyl-L-methionine site.

Belongs to the class I-like SAM-binding methyltransferase superfamily. As to quaternary structure, homodimer.

It carries out the reaction 4-O-demethylbarbatate + S-adenosyl-L-methionine = proatranorin I + S-adenosyl-L-homocysteine. It participates in secondary metabolite biosynthesis; terpenoid biosynthesis. O-methyltransferase; part of the gene cluster that mediates the biosynthesis of atranorin, a depside of polyketide origin that accumulates in the cortical or medullary layers of lichen thalli. Atr3 methylates the carboxyl group of 4-O-demethylbarbatic acid to yield proatranorin I. Atr3 is also able to methylate the atr2 product proatranorin III to produce the final compound atranorin. The first step in the pathway is performed by the non-reducing polyketide synthase atr1 that produces 4-O-demethylbarbatic acid composed of two 3-methylorsellinic acid (3MOA) moieties. The pathway continues with the actions of the cytochrome P450 monooygenase atr2 that catalizes the oxidation of c-9 and the O-methyltransferase atr3 that performs the methylation of the carboxyl group to yield atranorin, via the proatranorin II and III intermediates if atr2 acts first, or the proatranorin I intermediate if atr3 acts first. This is O-methyltransferase atr3 from Stereocaulon alpinum (Alpine snow lichen).